The following is an 860-amino-acid chain: Leucine--tRNA ligase (860 aa).

The 'HIGH' region signature appears at 42-52; the sequence is PYPSGRLHMGH. Residues 619 to 623 carry the 'KMSKS' region motif; sequence KMSKS. K622 contributes to the ATP binding site.

It belongs to the class-I aminoacyl-tRNA synthetase family.

The protein resides in the cytoplasm. It catalyses the reaction tRNA(Leu) + L-leucine + ATP = L-leucyl-tRNA(Leu) + AMP + diphosphate. This is Leucine--tRNA ligase from Salmonella typhi.